The sequence spans 638 residues: Chaperone protein DnaK (638 aa).

Phosphothreonine; by autocatalysis is present on Thr198. Disordered stretches follow at residues 539 to 559 (DGLAHSTKKQVEEAGDALASD) and 602 to 638 (QAKAQGEAEGQAHDAGQEKPADDVVDAEFEEVKDDKK). The span at 611–623 (GQAHDAGQEKPAD) shows a compositional bias: basic and acidic residues. Acidic residues predominate over residues 624–638 (DVVDAEFEEVKDDKK).

This sequence belongs to the heat shock protein 70 family.

In terms of biological role, acts as a chaperone. This is Chaperone protein DnaK from Shewanella frigidimarina (strain NCIMB 400).